The sequence spans 383 residues: Cell division protein FtsZ (383 aa).

GTP is bound by residues 20 to 24, 107 to 109, E138, R142, and N186; these read GGGGN and GTG.

Belongs to the FtsZ family. Homodimer. Polymerizes to form a dynamic ring structure in a strictly GTP-dependent manner. Interacts directly with several other division proteins.

It is found in the cytoplasm. Its function is as follows. Essential cell division protein that forms a contractile ring structure (Z ring) at the future cell division site. The regulation of the ring assembly controls the timing and the location of cell division. One of the functions of the FtsZ ring is to recruit other cell division proteins to the septum to produce a new cell wall between the dividing cells. Binds GTP and shows GTPase activity. The polypeptide is Cell division protein FtsZ (Escherichia coli O157:H7).